Consider the following 521-residue polypeptide: Probable protein kinase UbiB (521 aa).

The 379-residue stretch at 119–497 (SFEREPVASA…QKLTNRLLQA (379 aa)) folds into the Protein kinase domain. Residues 125 to 133 (VASASIAQV) and lysine 151 each bind ATP. Aspartate 286 acts as the Proton acceptor in catalysis. The chain crosses the membrane as a helical span at residues 496–516 (QAIVSAGIGFVIALILLQLVV).

Belongs to the ABC1 family. UbiB subfamily.

It localises to the cell inner membrane. It functions in the pathway cofactor biosynthesis; ubiquinone biosynthesis [regulation]. In terms of biological role, is probably a protein kinase regulator of UbiI activity which is involved in aerobic coenzyme Q (ubiquinone) biosynthesis. In Delftia acidovorans (strain DSM 14801 / SPH-1), this protein is Probable protein kinase UbiB.